The sequence spans 38 residues: MKVRASVKKICRNCKIIRRKNIIRVICSNDPKHKQRQG.

This sequence belongs to the bacterial ribosomal protein bL36 family.

The protein is Large ribosomal subunit protein bL36 of Buchnera aphidicola subsp. Cinara cedri (strain Cc).